The sequence spans 145 residues: Snaclec salmorin subunit B (145 aa).

The signal sequence occupies residues 1–23 (MGRFIFVSFGLLVVFVSLSGTGA). Disulfide bonds link cysteine 25-cysteine 36, cysteine 53-cysteine 141, and cysteine 118-cysteine 133. In terms of domain architecture, C-type lectin spans 32-142 (YEGHCYKLFN…CRMEAYFVCE (111 aa)). The Ca(2+) site is built by serine 64 and glutamate 70. A Ca(2+)-binding site is contributed by glutamate 142.

This sequence belongs to the snaclec family. In terms of assembly, heterodimer of subunits A and B; disulfide-linked. As to expression, expressed by the venom gland.

The protein resides in the secreted. Its function is as follows. Inhibits thrombin-induced fibrinogen clotting and factor Xa-induced prothrombin activation. Binds to thrombin and prothrombin exosites. This Gloydius brevicauda (Korean slamosa snake) protein is Snaclec salmorin subunit B.